The following is a 180-amino-acid chain: UPF0149 protein XOO1028 (180 aa).

Belongs to the UPF0149 family.

The chain is UPF0149 protein XOO1028 from Xanthomonas oryzae pv. oryzae (strain MAFF 311018).